Reading from the N-terminus, the 148-residue chain is Ubiquitin-conjugating enzyme E2 10 (148 aa).

Residues 1-147 enclose the UBC core domain; it reads MASKRILKEL…ARSWTQKYAM (147 aa). Catalysis depends on C85, which acts as the Glycyl thioester intermediate.

Belongs to the ubiquitin-conjugating enzyme family. In terms of assembly, interacts with CHIP and the E3 ubiquitin ligase BB. Associates with the E3 ubiquitin ligase JMJ24. In terms of tissue distribution, ubiquitously expressed with the highest levels in rosette leaves, roots and petals.

It carries out the reaction S-ubiquitinyl-[E1 ubiquitin-activating enzyme]-L-cysteine + [E2 ubiquitin-conjugating enzyme]-L-cysteine = [E1 ubiquitin-activating enzyme]-L-cysteine + S-ubiquitinyl-[E2 ubiquitin-conjugating enzyme]-L-cysteine.. Its pathway is protein modification; protein ubiquitination. Functionally, accepts the ubiquitin from the E1 complex and catalyzes its covalent attachment to other proteins. Mediates the selective degradation of short-lived and abnormal proteins. In Arabidopsis thaliana (Mouse-ear cress), this protein is Ubiquitin-conjugating enzyme E2 10.